The sequence spans 476 residues: Protein transport protein Sec61 subunit alpha (476 aa).

Over 2–33 (GIKFLEVIKPFCAVLPEIQKPERKIQFREKVL) the chain is Cytoplasmic. A helical membrane pass occupies residues 34 to 53 (WTAITLFIFLVCCQIPLFGI). Residues 54 to 76 (MSSDSADPFYWMRVILASNRGTL) are Lumenal-facing. Residues 77–96 (MELGISPIVTSGLIMQLLAG) traverse the membrane as a helical segment. At 97 to 117 (AKIIEVGDTPKDRALFNGAQK) the chain is on the cytoplasmic side. The chain crosses the membrane as a helical span at residues 118 to 138 (LFGMIITIGQAIVYVMTGMYG). Over 139–144 (DPSEMG) the chain is Lumenal. A helical transmembrane segment spans residues 145–165 (AGICLLIIIQLFVAGLIVLLL). Residues 166 to 172 (DELLQKG) are Cytoplasmic-facing. Residues 173–193 (YGLGSGISLFIATNICETIVW) traverse the membrane as a helical segment. The Lumenal segment spans residues 194 to 240 (KAFSPTTVNTGRGTEFEGAIIALFHLLATRTDKVRALREAFYRQNLP). A helical membrane pass occupies residues 241–261 (NILNLIATVFVFAVVIYFQGF). Residues 262–288 (RVDLPIKSARYRGQYNTYPIKLFYTSN) lie on the Cytoplasmic side of the membrane. The chain crosses the membrane as a helical span at residues 289-309 (IPIILQSALVSNLYVISQMLS). The Lumenal portion of the chain corresponds to 310 to 354 (TRFSGNFLVNLLGTWSDATSGGPARAYPVAGLCYYLSPPESFGSV). Residues 355–375 (LDDPVHAAIYIVFMLGSCAFF) traverse the membrane as a helical segment. At 376–420 (SKTWIEVSGSSAKDVAKQLKEQQMVMRGHRETSMVHELNRYIPTA) the chain is on the cytoplasmic side. The helical transmembrane segment at 421 to 441 (AAFGGLCIGGLSVMADFLGAI) threads the bilayer. Over 442 to 445 (GSGT) the chain is Lumenal. A helical membrane pass occupies residues 446-462 (GILLAVTIIYQYFEIFV). At 463 to 476 (KEQSEMGSMGALLF) the chain is on the cytoplasmic side.

It belongs to the SecY/SEC61-alpha family. The SEC61 channel-forming translocon complex consists of channel-forming core components SEC61A1, SEC61B and SEC61G and different auxiliary components such as SEC62 and SEC63. The SEC61 channel associates with the multi-pass translocon (MPT) complex.

The protein resides in the endoplasmic reticulum membrane. Its function is as follows. Component of SEC61 channel-forming translocon complex that mediates transport of signal peptide-containing precursor polypeptides across the endoplasmic reticulum (ER). Forms a ribosome receptor and a gated pore in the ER membrane, both functions required for cotranslational translocation of nascent polypeptides. May cooperate with auxiliary protein SEC62, SEC63 and HSPA5/BiP to enable post-translational transport of small presecretory proteins. The SEC61 channel is also involved in ER membrane insertion of transmembrane proteins: it mediates membrane insertion of the first few transmembrane segments of proteins, while insertion of subsequent transmembrane regions of multi-pass membrane proteins is mediated by the multi-pass translocon (MPT) complex. In Dissostichus mawsoni (Antarctic cod), this protein is Protein transport protein Sec61 subunit alpha (sec61a).